The primary structure comprises 344 residues: Ribosomal large subunit pseudouridine synthase D (344 aa).

A disordered region spans residues 1-29 (MMNRLINEQDGRNYSAKPDSSAAGSQENE). Positions 43-116 (LRLDQALAQL…IPLKILFEDD (74 aa)) constitute an S4 RNA-binding domain. The active site involves aspartate 164.

It belongs to the pseudouridine synthase RluA family.

Its subcellular location is the cytoplasm. It carries out the reaction uridine(1911/1915/1917) in 23S rRNA = pseudouridine(1911/1915/1917) in 23S rRNA. In terms of biological role, responsible for synthesis of pseudouridine from uracil at positions 1911, 1915 and 1917 in 23S ribosomal RNA. The polypeptide is Ribosomal large subunit pseudouridine synthase D (rluD) (Nitrosomonas europaea (strain ATCC 19718 / CIP 103999 / KCTC 2705 / NBRC 14298)).